The chain runs to 430 residues: Enolase (430 aa).

Gln164 lines the (2R)-2-phosphoglycerate pocket. The Proton donor role is filled by Glu208. Asp245, Glu288, and Asp315 together coordinate Mg(2+). (2R)-2-phosphoglycerate contacts are provided by Lys340, Arg369, Ser370, and Lys391. Catalysis depends on Lys340, which acts as the Proton acceptor.

The protein belongs to the enolase family. Mg(2+) is required as a cofactor.

It localises to the cytoplasm. The protein resides in the secreted. The protein localises to the cell surface. The catalysed reaction is (2R)-2-phosphoglycerate = phosphoenolpyruvate + H2O. It participates in carbohydrate degradation; glycolysis; pyruvate from D-glyceraldehyde 3-phosphate: step 4/5. Its function is as follows. Catalyzes the reversible conversion of 2-phosphoglycerate (2-PG) into phosphoenolpyruvate (PEP). It is essential for the degradation of carbohydrates via glycolysis. The chain is Enolase from Thermococcus onnurineus (strain NA1).